The sequence spans 198 residues: Penicillin-binding protein activator LpoB (198 aa).

Positions 1–20 are cleaved as a signal peptide; the sequence is MSWIRIRRSGVLLLALVLSG. Cysteine 21 is lipidated: N-palmitoyl cysteine. A lipid anchor (S-diacylglycerol cysteine) is attached at cysteine 21. Residues 28 to 62 are disordered; it reads PQPAAPVEPVTPPVNVPQPPKAEPGQNVPPPPKMQ. A compositionally biased stretch (pro residues) spans 30–61; the sequence is PAAPVEPVTPPVNVPQPPKAEPGQNVPPPPKM.

Belongs to the LpoB family. As to quaternary structure, interacts with PBP1b.

It is found in the cell outer membrane. Regulator of peptidoglycan synthesis that is essential for the function of penicillin-binding protein 1B (PBP1b). This Erwinia amylovora (strain CFBP1430) protein is Penicillin-binding protein activator LpoB.